A 437-amino-acid polypeptide reads, in one-letter code: GTPase Der (437 aa).

EngA-type G domains are found at residues 4 to 168 (NIVA…PEKP) and 178 to 353 (PRFA…ENRK). Residues 10 to 17 (GRPNVGKS), 57 to 61 (DTGGY), 120 to 123 (NKVD), 184 to 191 (GRPNAGKS), 231 to 235 (DTAGI), and 296 to 299 (NKWD) contribute to the GTP site. In terms of domain architecture, KH-like spans 354-437 (QRISTSKFNE…VPIDIYIREK (84 aa)).

This sequence belongs to the TRAFAC class TrmE-Era-EngA-EngB-Septin-like GTPase superfamily. EngA (Der) GTPase family. Associates with the 50S ribosomal subunit.

Functionally, GTPase that plays an essential role in the late steps of ribosome biogenesis. This chain is GTPase Der, found in Flavobacterium johnsoniae (strain ATCC 17061 / DSM 2064 / JCM 8514 / BCRC 14874 / CCUG 350202 / NBRC 14942 / NCIMB 11054 / UW101) (Cytophaga johnsonae).